The sequence spans 263 residues: N-acyl homoserine lactonase AttM (263 aa).

His103, His105, Asp107, His108, His180, Asp202, and His247 together coordinate Zn(2+).

Belongs to the metallo-beta-lactamase superfamily. The cofactor is Zn(2+).

It carries out the reaction an N-acyl-L-homoserine lactone + H2O = an N-acyl-L-homoserine + H(+). The polypeptide is N-acyl homoserine lactonase AttM (Agrobacterium fabrum (strain C58 / ATCC 33970) (Agrobacterium tumefaciens (strain C58))).